Reading from the N-terminus, the 72-residue chain is UPF0352 protein SO_2176 (72 aa).

Belongs to the UPF0352 family.

This is UPF0352 protein SO_2176 from Shewanella oneidensis (strain ATCC 700550 / JCM 31522 / CIP 106686 / LMG 19005 / NCIMB 14063 / MR-1).